We begin with the raw amino-acid sequence, 768 residues long: Envelope glycoprotein gp160 (768 aa).

An N-terminal signal peptide occupies residues methionine 1 to glycine 16. The Extracellular segment spans residues isoleucine 17 to asparagine 701. Asparagine 37 carries an N-linked (GlcNAc...) asparagine; by host glycan. An intrachain disulfide couples cysteine 44 to cysteine 57. Residues asparagine 70, asparagine 141, asparagine 151, asparagine 166, asparagine 181, asparagine 200, and asparagine 211 are each glycosylated (N-linked (GlcNAc...) asparagine; by host). Intrachain disulfides connect cysteine 103–cysteine 219, cysteine 110–cysteine 210, cysteine 115–cysteine 167, cysteine 232–cysteine 262, and cysteine 242–cysteine 254. The V1 stretch occupies residues cysteine 115–asparagine 166. A V2 region spans residues cysteine 167–cysteine 210. 11 N-linked (GlcNAc...) asparagine; by host glycosylation sites follow: asparagine 256, asparagine 267, asparagine 277, asparagine 283, asparagine 295, asparagine 307, asparagine 317, asparagine 374, asparagine 415, asparagine 490, and asparagine 493. A V3 region spans residues cysteine 312–tryptophan 344. The cysteines at positions 312 and 345 are disulfide-linked. 2 disulfides stabilise this stretch: cysteine 397-cysteine 473 and cysteine 404-cysteine 446. A V4 region spans residues cysteine 404 to cysteine 446. The V5 stretch occupies residues glutamine 489–leucine 496. The segment at valine 539 to alanine 559 is fusion peptide. Positions leucine 602 to arginine 618 are immunosuppression. Residues asparagine 646 and asparagine 662 are each glycosylated (N-linked (GlcNAc...) asparagine; by host). Positions leucine 650–tryptophan 687 form a coiled coil. An MPER; binding to GalCer region spans residues lysine 683–lysine 704. The helical transmembrane segment at isoleucine 702–leucine 722 threads the bilayer. Over tyrosine 723 to histidine 768 the chain is Cytoplasmic. Positions tyrosine 733–leucine 736 match the YXXL motif; contains endocytosis signal motif. Residues proline 744 to histidine 768 are disordered.

The mature envelope protein (Env) consists of a homotrimer of non-covalently associated gp120-gp41 heterodimers. The resulting complex protrudes from the virus surface as a spike. Interacts with host CD4 and CCR5. Gp120 also interacts with the C-type lectins CD209/DC-SIGN and CLEC4M/DC-SIGNR (collectively referred to as DC-SIGN(R)). As to quaternary structure, the mature envelope protein (Env) consists of a homotrimer of non-covalently associated gp120-gp41 heterodimers. The resulting complex protrudes from the virus surface as a spike. In terms of processing, specific enzymatic cleavages in vivo yield mature proteins. Envelope glycoproteins are synthesized as an inactive precursor that is heavily N-glycosylated and processed likely by host cell furin in the Golgi to yield the mature SU and TM proteins. The cleavage site between SU and TM requires the minimal sequence [KR]-X-[KR]-R.

Its subcellular location is the virion membrane. The protein resides in the host cell membrane. It is found in the host endosome membrane. The surface protein gp120 (SU) attaches the virus to the host lymphoid cell by binding to the primary receptor CD4. This interaction induces a structural rearrangement creating a high affinity binding site for a chemokine coreceptor like CCR5. This peculiar 2 stage receptor-interaction strategy allows gp120 to maintain the highly conserved coreceptor-binding site in a cryptic conformation, protected from neutralizing antibodies. These changes are transmitted to the transmembrane protein gp41 and are thought to activate its fusogenic potential by unmasking its fusion peptide. Functionally, surface protein gp120 (SU) may target the virus to gut-associated lymphoid tissue (GALT) by binding host ITGA4/ITGB7 (alpha-4/beta-7 integrins), a complex that mediates T-cell migration to the GALT. Interaction between gp120 and ITGA4/ITGB7 would allow the virus to enter GALT early in the infection, infecting and killing most of GALT's resting CD4+ T-cells. This T-cell depletion is believed to be the major insult to the host immune system leading to AIDS. In terms of biological role, the surface protein gp120 is a ligand for CD209/DC-SIGN and CLEC4M/DC-SIGNR, which are respectively found on dendritic cells (DCs), and on endothelial cells of liver sinusoids and lymph node sinuses. These interactions allow capture of viral particles at mucosal surfaces by these cells and subsequent transmission to permissive cells. DCs are professional antigen presenting cells, critical for host immunity by inducing specific immune responses against a broad variety of pathogens. They act as sentinels in various tissues where they take up antigen, process it, and present it to T-cells following migration to lymphoid organs. SIV subverts the migration properties of dendritic cells to gain access to CD4+ T-cells in lymph nodes. Virus transmission to permissive T-cells occurs either in trans (without DCs infection, through viral capture and transmission), or in cis (following DCs productive infection, through the usual CD4-gp120 interaction), thereby inducing a robust infection. In trans infection, bound virions remain infectious over days and it is proposed that they are not degraded, but protected in non-lysosomal acidic organelles within the DCs close to the cell membrane thus contributing to the viral infectious potential during DCs' migration from the periphery to the lymphoid tissues. On arrival at lymphoid tissues, intact virions recycle back to DCs' cell surface allowing virus transmission to CD4+ T-cells. Virion capture also seems to lead to MHC-II-restricted viral antigen presentation, and probably to the activation of SIV-specific CD4+ cells. Its function is as follows. The transmembrane protein gp41 (TM) acts as a class I viral fusion protein. Under the current model, the protein has at least 3 conformational states: pre-fusion native state, pre-hairpin intermediate state, and post-fusion hairpin state. During fusion of viral and target intracellular membranes, the coiled coil regions (heptad repeats) assume a trimer-of-hairpins structure, positioning the fusion peptide in close proximity to the C-terminal region of the ectodomain. The formation of this structure appears to drive apposition and subsequent fusion of viral and target cell membranes. Complete fusion occurs in host cell endosomes. The virus undergoes clathrin-dependent internalization long before endosomal fusion, thus minimizing the surface exposure of conserved viral epitopes during fusion and reducing the efficacy of inhibitors targeting these epitopes. Membranes fusion leads to delivery of the nucleocapsid into the cytoplasm. The envelope glycoprotein gp160 precursor down-modulates cell surface CD4 antigen by interacting with it in the endoplasmic reticulum and blocking its transport to the cell surface. Functionally, the gp120-gp41 heterodimer allows rapid transcytosis of the virus through CD4 negative cells such as simple epithelial monolayers of the intestinal, rectal and endocervical epithelial barriers. Both gp120 and gp41 specifically recognize glycosphingolipids galactosyl-ceramide (GalCer) or 3' sulfo-galactosyl-ceramide (GalS) present in the lipid rafts structures of epithelial cells. Binding to these alternative receptors allows the rapid transcytosis of the virus through the epithelial cells. This transcytotic vesicle-mediated transport of virions from the apical side to the basolateral side of the epithelial cells does not involve infection of the cells themselves. This Simian immunodeficiency virus agm.vervet (isolate AGM155) (SIV-agm.ver) protein is Envelope glycoprotein gp160 (env).